A 434-amino-acid polypeptide reads, in one-letter code: MFS-type transporter AFUA_1G00970 (434 aa).

Helical transmembrane passes span Val21 to Phe41, Trp60 to Val80, Val87 to Ser107, Ile112 to Phe132, Leu145 to Ile165, Val182 to Pro202, Val240 to Phe260, Tyr278 to Ala298, Val301 to Trp321, Leu327 to Leu347, Ala364 to Gly384, and Leu393 to Ala413. The tract at residues Pro201–Thr225 is disordered.

This sequence belongs to the major facilitator superfamily. Monocarboxylate porter (TC 2.A.1.13) family.

It localises to the cell membrane. Its function is as follows. MFS-type transporter; part of the gene cluster that mediates the biosynthesis of fumigermin that inhibits germination of spores of the inducing S.rapamycinicus, and thus helps the fungus to defend resources in the shared habitat against a bacterial competitor. May be involved in the secretion of fumigermin. The sequence is that of MFS-type transporter AFUA_1G00970 from Aspergillus fumigatus (strain ATCC MYA-4609 / CBS 101355 / FGSC A1100 / Af293) (Neosartorya fumigata).